Here is a 608-residue protein sequence, read N- to C-terminus: Tyrosyl-DNA phosphodiesterase 1 (608 aa).

The tract at residues 1–101 (MSQEGDYGRW…SDDELQPEMP (101 aa)) is disordered. A Phosphoserine modification is found at Ser61. Position 147 is a phosphothreonine (Thr147). Position 148 is a phosphoserine (Ser148). His263 functions as the Nucleophile in the catalytic mechanism. Lys265 provides a ligand contact to substrate. The tract at residues 400–403 (SVGS) is interaction with DNA. The active-site Proton donor/acceptor is His493. Residue Lys495 coordinates substrate.

The protein belongs to the tyrosyl-DNA phosphodiesterase family. As to quaternary structure, monomer. Post-translationally, phosphorylated on serine and/or threonine residues, but not on tyrosine residues. In terms of tissue distribution, ubiquitously expressed. Similar expression throughout the central nervous system (whole brain, amygdala, caudate nucleus, cerebellum, cerebral cortex, frontal lobe, hippocampus, medulla oblongata, occipital lobe, putamen, substantia nigra, temporal lobe, thalamus, nucleus accumbens and spinal cord) and increased expression in testis and thymus.

It is found in the nucleus. Its subcellular location is the cytoplasm. Its function is as follows. DNA repair enzyme that can remove a variety of covalent adducts from DNA through hydrolysis of a 3'-phosphodiester bond, giving rise to DNA with a free 3' phosphate. Catalyzes the hydrolysis of dead-end complexes between DNA and the topoisomerase I active site tyrosine residue. Hydrolyzes 3'-phosphoglycolates on protruding 3' ends on DNA double-strand breaks due to DNA damage by radiation and free radicals. Acts on blunt-ended double-strand DNA breaks and on single-stranded DNA. Has low 3'exonuclease activity and can remove a single nucleoside from the 3'end of DNA and RNA molecules with 3'hydroxyl groups. Has no exonuclease activity towards DNA or RNA with a 3'phosphate. This chain is Tyrosyl-DNA phosphodiesterase 1 (TDP1), found in Homo sapiens (Human).